We begin with the raw amino-acid sequence, 291 residues long: ATP synthase gamma chain (291 aa).

This sequence belongs to the ATPase gamma chain family. As to quaternary structure, F-type ATPases have 2 components, CF(1) - the catalytic core - and CF(0) - the membrane proton channel. CF(1) has five subunits: alpha(3), beta(3), gamma(1), delta(1), epsilon(1). CF(0) has three main subunits: a, b and c.

Its subcellular location is the cell inner membrane. In terms of biological role, produces ATP from ADP in the presence of a proton gradient across the membrane. The gamma chain is believed to be important in regulating ATPase activity and the flow of protons through the CF(0) complex. The protein is ATP synthase gamma chain of Neisseria gonorrhoeae (strain ATCC 700825 / FA 1090).